A 427-amino-acid polypeptide reads, in one-letter code: Glutamate-1-semialdehyde 2,1-aminomutase (427 aa).

Lysine 265 is modified (N6-(pyridoxal phosphate)lysine).

It belongs to the class-III pyridoxal-phosphate-dependent aminotransferase family. HemL subfamily. In terms of assembly, homodimer. It depends on pyridoxal 5'-phosphate as a cofactor.

It localises to the cytoplasm. It carries out the reaction (S)-4-amino-5-oxopentanoate = 5-aminolevulinate. The protein operates within porphyrin-containing compound metabolism; protoporphyrin-IX biosynthesis; 5-aminolevulinate from L-glutamyl-tRNA(Glu): step 2/2. This chain is Glutamate-1-semialdehyde 2,1-aminomutase, found in Bordetella pertussis (strain Tohama I / ATCC BAA-589 / NCTC 13251).